An 819-amino-acid polypeptide reads, in one-letter code: DNA topoisomerase 4 subunit A (819 aa).

In terms of domain architecture, Topo IIA-type catalytic spans 30 to 496 (LPDIRDGLKP…QIIEIDTASL (467 aa)). Tyr118 serves as the catalytic O-(5'-phospho-DNA)-tyrosine intermediate.

This sequence belongs to the type II topoisomerase GyrA/ParC subunit family. ParC type 2 subfamily. In terms of assembly, heterotetramer composed of ParC and ParE.

The protein localises to the cell membrane. The catalysed reaction is ATP-dependent breakage, passage and rejoining of double-stranded DNA.. In terms of biological role, topoisomerase IV is essential for chromosome segregation. It relaxes supercoiled DNA. Performs the decatenation events required during the replication of a circular DNA molecule. The polypeptide is DNA topoisomerase 4 subunit A (Streptococcus pyogenes serotype M1).